Consider the following 120-residue polypeptide: uncharacterized protein (120 aa).

The first 19 residues, 1 to 19 (MTSFAVVARLITRAPRVRA), serve as a signal peptide directing secretion. Disordered regions lie at residues 48-71 (VAKK…DKAK) and 90-120 (DTVT…KNLK). A compositionally biased stretch (basic and acidic residues) spans 90–103 (DTVTGKTEETKESI).

This is an uncharacterized protein from Arabidopsis thaliana (Mouse-ear cress).